We begin with the raw amino-acid sequence, 387 residues long: S-adenosylmethionine synthase (387 aa).

Position 8 (Glu-8) interacts with Mg(2+). An ATP-binding site is contributed by His-14. Residue Glu-42 participates in K(+) binding. 2 residues coordinate L-methionine: Glu-55 and Gln-98. ATP contacts are provided by residues 166-168, 234-237, Asp-245, 251-252, Ala-268, Lys-272, and Lys-276; these read DGK, SGRF, and RK. Residue Asp-245 participates in L-methionine binding. Position 276 (Lys-276) interacts with L-methionine.

The protein belongs to the AdoMet synthase family. As to quaternary structure, homotetramer. It depends on Mn(2+) as a cofactor. Mg(2+) is required as a cofactor. Co(2+) serves as cofactor. The cofactor is K(+).

It localises to the cytoplasm. The catalysed reaction is L-methionine + ATP + H2O = S-adenosyl-L-methionine + phosphate + diphosphate. It participates in amino-acid biosynthesis; S-adenosyl-L-methionine biosynthesis; S-adenosyl-L-methionine from L-methionine: step 1/1. Its function is as follows. Catalyzes the formation of S-adenosylmethionine from methionine and ATP. The reaction comprises two steps that are both catalyzed by the same enzyme: formation of S-adenosylmethionine (AdoMet) and triphosphate, and subsequent hydrolysis of the triphosphate. The polypeptide is S-adenosylmethionine synthase (METK-1) (Ostreococcus lucimarinus (strain CCE9901)).